The chain runs to 263 residues: Small ribosomal subunit protein uS3 (263 aa).

Residues 39–107 (VREYLKKKLK…PVHVNIEEIR (69 aa)) enclose the KH type-2 domain. A disordered region spans residues 211-263 (GELPPEAATPREEERRPRRAPRGDRPDGARTGRPGGRGRGPRKADAAPAPEGE). A compositionally biased stretch (basic and acidic residues) spans 219–240 (TPREEERRPRRAPRGDRPDGAR).

Belongs to the universal ribosomal protein uS3 family. Part of the 30S ribosomal subunit. Forms a tight complex with proteins S10 and S14.

In terms of biological role, binds the lower part of the 30S subunit head. Binds mRNA in the 70S ribosome, positioning it for translation. This chain is Small ribosomal subunit protein uS3, found in Bordetella pertussis (strain Tohama I / ATCC BAA-589 / NCTC 13251).